The primary structure comprises 428 residues: Adenylosuccinate synthetase (428 aa).

GTP contacts are provided by residues 12 to 18 (GDEGKGK) and 40 to 42 (GHT). The Proton acceptor role is filled by aspartate 13. Aspartate 13 and glycine 40 together coordinate Mg(2+). IMP contacts are provided by residues 13–16 (DEGK), 38–41 (NAGH), threonine 128, arginine 142, glutamine 222, threonine 237, and arginine 301. Histidine 41 acts as the Proton donor in catalysis. 297-303 (VNTGRAR) is a substrate binding site. GTP contacts are provided by residues arginine 303, 329–331 (KLD), and 411–413 (STS).

The protein belongs to the adenylosuccinate synthetase family. In terms of assembly, homodimer. Mg(2+) is required as a cofactor.

The protein localises to the cytoplasm. It carries out the reaction IMP + L-aspartate + GTP = N(6)-(1,2-dicarboxyethyl)-AMP + GDP + phosphate + 2 H(+). Its pathway is purine metabolism; AMP biosynthesis via de novo pathway; AMP from IMP: step 1/2. Plays an important role in the de novo pathway of purine nucleotide biosynthesis. Catalyzes the first committed step in the biosynthesis of AMP from IMP. This is Adenylosuccinate synthetase from Caulobacter sp. (strain K31).